Consider the following 188-residue polypeptide: Peptidyl-prolyl cis-trans isomerase H (188 aa).

The residue at position 2 (alanine 2) is an N-acetylalanine. Residues phenylalanine 14 to leucine 176 enclose the PPIase cyclophilin-type domain.

Belongs to the cyclophilin-type PPIase family. PPIase H subfamily. Interacts directly with PRPF4. Part of a heteromeric complex containing PPIH, PRPF3 and PRPF4 that is stable in the absence of RNA. Component of the U4/U6-U5 tri-snRNP complex composed of the U4, U6 and U5 snRNAs and at least PRPF3, PRPF4, PRPF6, PRPF8, PRPF31, SNRNP200, TXNL4A, SNRNP40, DDX23, CD2BP2, PPIH, SNU13, EFTUD2, SART1 and USP39. Heterodimer with PRPF18. Heterodimer with PRPF18.

The protein localises to the nucleus speckle. It localises to the cytoplasm. The catalysed reaction is [protein]-peptidylproline (omega=180) = [protein]-peptidylproline (omega=0). Inhibited by cyclosporin A. Its function is as follows. PPIase that catalyzes the cis-trans isomerization of proline imidic peptide bonds in oligopeptides and may therefore assist protein folding. Participates in pre-mRNA splicing. May play a role in the assembly of the U4/U5/U6 tri-snRNP complex, one of the building blocks of the spliceosome. May act as a chaperone. This Mus musculus (Mouse) protein is Peptidyl-prolyl cis-trans isomerase H (Ppih).